A 237-amino-acid chain; its full sequence is Uridylate kinase (237 aa).

9 to 12 (KLSG) provides a ligand contact to ATP. Gly51 contacts UMP. Positions 52 and 56 each coordinate ATP. UMP contacts are provided by residues Asp71 and 132 to 139 (CGNPFFTT). ATP is bound by residues Thr159, Tyr165, and Asp168.

It belongs to the UMP kinase family. As to quaternary structure, homohexamer.

It localises to the cytoplasm. It catalyses the reaction UMP + ATP = UDP + ADP. Its pathway is pyrimidine metabolism; CTP biosynthesis via de novo pathway; UDP from UMP (UMPK route): step 1/1. Its activity is regulated as follows. Inhibited by UTP. Catalyzes the reversible phosphorylation of UMP to UDP. The sequence is that of Uridylate kinase from Prochlorococcus marinus (strain MIT 9313).